Consider the following 418-residue polypeptide: tRNA(Met) cytidine acetate ligase (418 aa).

Positions 95, 161, and 186 each coordinate ATP.

Belongs to the TmcAL family.

The protein localises to the cytoplasm. It carries out the reaction cytidine(34) in elongator tRNA(Met) + acetate + ATP = N(4)-acetylcytidine(34) in elongator tRNA(Met) + AMP + diphosphate. Its function is as follows. Catalyzes the formation of N(4)-acetylcytidine (ac(4)C) at the wobble position of elongator tRNA(Met), using acetate and ATP as substrates. First activates an acetate ion to form acetyladenylate (Ac-AMP) and then transfers the acetyl group to tRNA to form ac(4)C34. This is tRNA(Met) cytidine acetate ligase from Thermotoga petrophila (strain ATCC BAA-488 / DSM 13995 / JCM 10881 / RKU-1).